The following is a 114-amino-acid chain: Fumarate reductase subunit D (114 aa).

The next 3 membrane-spanning stretches (helical) occupy residues 24–44, 50–70, and 92–112; these read VSAI…PFGL, LITF…TIFP, and GGFI…FAVI.

It belongs to the FrdD family. As to quaternary structure, part of an enzyme complex containing four subunits: a flavoprotein (FrdA), an iron-sulfur protein (FrdB), and two hydrophobic anchor proteins (FrdC and FrdD).

It localises to the cell inner membrane. Its function is as follows. Anchors the catalytic components of the fumarate reductase complex to the cell membrane, binds quinones. The sequence is that of Fumarate reductase subunit D from Haemophilus influenzae (strain PittEE).